An 802-amino-acid chain; its full sequence is Fibroblast growth factor receptor 3 (802 aa).

An Ig-like C2-type 1 domain is found at Pro-27 to Thr-115. An intrachain disulfide couples Cys-52 to Cys-98. 3 N-linked (GlcNAc...) asparagine glycosylation sites follow: Asn-74, Asn-87, and Asn-109. The tract at residues Asp-116–Met-148 is disordered. The segment covering Gly-121–Asp-136 has biased composition (acidic residues). The span at Arg-137 to Met-148 shows a compositional bias: basic and acidic residues. Ig-like C2-type domains follow at residues Pro-140–Asp-233 and Pro-242–His-342. Cys-165 and Cys-217 form a disulfide bridge. N-linked (GlcNAc...) asparagine glycans are attached at residues Asn-214, Asn-251, Asn-283, Asn-303, and Asn-315. Cys-264 and Cys-326 are disulfide-bonded. Residues Ile-363–Ile-383 traverse the membrane as a helical segment. Over Thr-384 to Thr-802 the chain is Cytoplasmic. Residues Leu-462–Leu-751 enclose the Protein kinase domain. ATP-binding positions include Leu-468–Val-476 and Lys-498. Asp-607 acts as the Proton acceptor in catalysis. Phosphotyrosine; by autocatalysis occurs at positions 637, 638, 714, and 750.

Belongs to the protein kinase superfamily. Tyr protein kinase family. Fibroblast growth factor receptor subfamily. As to quaternary structure, monomer. Homodimer after ligand binding. Post-translationally, autophosphorylated. Binding of FGF family members together with heparan sulfate proteoglycan or heparin promotes receptor dimerization and autophosphorylation on tyrosine residues. Autophosphorylation occurs in trans between the two FGFR molecules present in the dimer.

The protein localises to the cell membrane. It carries out the reaction L-tyrosyl-[protein] + ATP = O-phospho-L-tyrosyl-[protein] + ADP + H(+). With respect to regulation, present in an inactive conformation in the absence of bound ligand. Ligand binding leads to dimerization and activation by autophosphorylation on tyrosine residues. Functionally, tyrosine-protein kinase that acts as a cell-surface receptor for fibroblast growth factors and plays an essential role in the regulation of cell proliferation, differentiation and apoptosis. Plays an essential role in the regulation of chondrocyte differentiation, proliferation and apoptosis, and is required for normal skeleton development. Regulates both osteogenesis and postnatal bone mineralization by osteoblasts. Promotes apoptosis in chondrocytes, but can also promote cancer cell proliferation. Phosphorylates PLCG1, CBL and FRS2. Ligand binding leads to the activation of several signaling cascades. Activation of PLCG1 leads to the production of the cellular signaling molecules diacylglycerol and inositol 1,4,5-trisphosphate. Phosphorylation of FRS2 triggers recruitment of GRB2, GAB1, PIK3R1 and SOS1, and mediates activation of RAS, MAPK1/ERK2, MAPK3/ERK1 and the MAP kinase signaling pathway, as well as of the AKT1 signaling pathway. The chain is Fibroblast growth factor receptor 3 (fgfr3) from Xenopus laevis (African clawed frog).